The primary structure comprises 412 residues: uncharacterized protein (412 aa).

A signal peptide spans 1–21 (MIIPMLRILLIVLFVLNLVTS). 3 disordered regions span residues 85 to 134 (QPPA…STTT), 250 to 294 (STTE…TPGT), and 327 to 357 (VELG…HVRE). The segment covering 88–105 (ASLTSLPAAPPSAQVAPP) has biased composition (low complexity). The segment covering 124–134 (TPQASISSTTT) has biased composition (polar residues). Low complexity-rich tracts occupy residues 250 to 259 (STTENTTEQS) and 266 to 293 (TTST…GTPG). Acidic residues predominate over residues 330–347 (GEGDDDEENDDDSSEEEE). Basic and acidic residues predominate over residues 348-357 (TKPPARHVRE). Residues 371-408 (CDEEEDDKGKICKLWAAGGLCGTHKPTMFLFCRKTCLC) enclose the ShKT domain.

This is an uncharacterized protein from Caenorhabditis elegans.